The chain runs to 545 residues: T-complex protein 1 subunit alpha (545 aa).

It belongs to the TCP-1 chaperonin family. In terms of assembly, heterooligomeric complex of about 850 to 900 kDa that forms two stacked rings, 12 to 16 nm in diameter.

It localises to the cytoplasm. Its function is as follows. Molecular chaperone; assists the folding of proteins upon ATP hydrolysis. Known to play a role, in vitro, in the folding of actin and tubulin. This is T-complex protein 1 subunit alpha (TCP-1A) from Schistosoma mansoni (Blood fluke).